The following is a 137-amino-acid chain: MYTRTVRLQDTDAAGVVYFTSALDICHEAFEDSLMGAGIDIRTFFSNPDTATPIIHADIDFLKPSFCGDQLTLQLSTHQLAEDEFEVRYNITAVNKGERLIAKATIRHVCINPINRQRQPLPKELVTWIQRWSLAMS.

Asp-12 is a catalytic residue.

It belongs to the 4-hydroxybenzoyl-CoA thioesterase family. DHNA-CoA hydrolase subfamily.

The enzyme catalyses 1,4-dihydroxy-2-naphthoyl-CoA + H2O = 1,4-dihydroxy-2-naphthoate + CoA + H(+). It participates in cofactor biosynthesis; phylloquinone biosynthesis. It functions in the pathway quinol/quinone metabolism; 1,4-dihydroxy-2-naphthoate biosynthesis; 1,4-dihydroxy-2-naphthoate from chorismate: step 7/7. Catalyzes the hydrolysis of 1,4-dihydroxy-2-naphthoyl-CoA (DHNA-CoA) to 1,4-dihydroxy-2-naphthoate (DHNA), a reaction involved in phylloquinone (vitamin K1) biosynthesis. The polypeptide is 1,4-dihydroxy-2-naphthoyl-CoA hydrolase (Acaryochloris marina (strain MBIC 11017)).